The primary structure comprises 358 residues: Flap endonuclease 1 (358 aa).

The tract at residues 1-103 (MGIKRLSKLI…HEFEKRTKRR (103 aa)) is N-domain. Asp34 contacts Mg(2+). Residues Arg47 and Arg69 each coordinate DNA. Positions 85, 157, 159, 178, and 180 each coordinate Mg(2+). The interval 121 to 252 (LVSKYDRMNV…KRAFEYIKKY (132 aa)) is I-domain. Glu157 serves as a coordination point for DNA. 2 residues coordinate DNA: Gly230 and Asp232. Asp232 contributes to the Mg(2+) binding site. The segment at 346-354 (KQTRIDSFF) is interaction with PCNA.

Belongs to the XPG/RAD2 endonuclease family. FEN1 subfamily. In terms of assembly, interacts with PCNA. Three molecules of FEN1 bind to one PCNA trimer with each molecule binding to one PCNA monomer. PCNA stimulates the nuclease activity without altering cleavage specificity. The cofactor is Mg(2+). In terms of processing, phosphorylated. Phosphorylation upon DNA damage induces relocalization to the nuclear plasma.

The protein localises to the nucleus. It localises to the nucleolus. The protein resides in the nucleoplasm. It is found in the mitochondrion. Structure-specific nuclease with 5'-flap endonuclease and 5'-3' exonuclease activities involved in DNA replication and repair. During DNA replication, cleaves the 5'-overhanging flap structure that is generated by displacement synthesis when DNA polymerase encounters the 5'-end of a downstream Okazaki fragment. It enters the flap from the 5'-end and then tracks to cleave the flap base, leaving a nick for ligation. Also involved in the long patch base excision repair (LP-BER) pathway, by cleaving within the apurinic/apyrimidinic (AP) site-terminated flap. Acts as a genome stabilization factor that prevents flaps from equilibrating into structures that lead to duplications and deletions. Also possesses 5'-3' exonuclease activity on nicked or gapped double-stranded DNA, and exhibits RNase H activity. Also involved in replication and repair of rDNA and in repairing mitochondrial DNA. This Enterocytozoon bieneusi (strain H348) (Microsporidian parasite) protein is Flap endonuclease 1.